The primary structure comprises 312 residues: Glycerol 2-dehydrogenase (NADP(+)) (312 aa).

Y56 (proton donor) is an active-site residue. H112 lines the substrate pocket. 220–274 (SPLGSTDAPLLKEPVILEIAKKNNVQPGHVVISWHVQRGYVVLPKSVNPDRIKTN) serves as a coordination point for NADP(+). S306 is modified (phosphoserine).

Belongs to the aldo/keto reductase family.

The protein resides in the cytoplasm. The catalysed reaction is glycerol + NADP(+) = dihydroxyacetone + NADPH + H(+). Functionally, glycerol dehydrogenase involved in glycerol catabolism under microaerobic conditions. Has mRNA binding activity. The sequence is that of Glycerol 2-dehydrogenase (NADP(+)) (GCY1) from Saccharomyces cerevisiae (strain ATCC 204508 / S288c) (Baker's yeast).